The sequence spans 274 residues: Shikimate dehydrogenase (NADP(+)) (274 aa).

Shikimate-binding positions include 14 to 16 (SKS) and T61. The active-site Proton acceptor is the K65. E77 contributes to the NADP(+) binding site. Residues N86 and D102 each contribute to the shikimate site. NADP(+) is bound by residues 126-130 (GAGGA), 149-154 (NRTLEK), and M212. A shikimate-binding site is contributed by Y214. Residue G237 participates in NADP(+) binding.

This sequence belongs to the shikimate dehydrogenase family. As to quaternary structure, homodimer.

It carries out the reaction shikimate + NADP(+) = 3-dehydroshikimate + NADPH + H(+). It functions in the pathway metabolic intermediate biosynthesis; chorismate biosynthesis; chorismate from D-erythrose 4-phosphate and phosphoenolpyruvate: step 4/7. Functionally, involved in the biosynthesis of the chorismate, which leads to the biosynthesis of aromatic amino acids. Catalyzes the reversible NADPH linked reduction of 3-dehydroshikimate (DHSA) to yield shikimate (SA). In Actinobacillus pleuropneumoniae serotype 5b (strain L20), this protein is Shikimate dehydrogenase (NADP(+)).